Reading from the N-terminus, the 204-residue chain is Holliday junction branch migration complex subunit RuvA (204 aa).

Positions 1-64 (MIGKLKGTID…EDQLKLFGFM (64 aa)) are domain I. The tract at residues 65 to 143 (TALEREWFNL…AYAGEAINIA (79 aa)) is domain II. The flexible linker stretch occupies residues 144-151 (LKRELGEG). A domain III region spans residues 152–204 (VAAAPVADAVSALTNLGYSRDQAANAVAAAMKTAGEGADSAKLIRLGLKELAR).

The protein belongs to the RuvA family. Homotetramer. Forms an RuvA(8)-RuvB(12)-Holliday junction (HJ) complex. HJ DNA is sandwiched between 2 RuvA tetramers; dsDNA enters through RuvA and exits via RuvB. An RuvB hexamer assembles on each DNA strand where it exits the tetramer. Each RuvB hexamer is contacted by two RuvA subunits (via domain III) on 2 adjacent RuvB subunits; this complex drives branch migration. In the full resolvosome a probable DNA-RuvA(4)-RuvB(12)-RuvC(2) complex forms which resolves the HJ.

Its subcellular location is the cytoplasm. Functionally, the RuvA-RuvB-RuvC complex processes Holliday junction (HJ) DNA during genetic recombination and DNA repair, while the RuvA-RuvB complex plays an important role in the rescue of blocked DNA replication forks via replication fork reversal (RFR). RuvA specifically binds to HJ cruciform DNA, conferring on it an open structure. The RuvB hexamer acts as an ATP-dependent pump, pulling dsDNA into and through the RuvAB complex. HJ branch migration allows RuvC to scan DNA until it finds its consensus sequence, where it cleaves and resolves the cruciform DNA. In Rhizobium etli (strain ATCC 51251 / DSM 11541 / JCM 21823 / NBRC 15573 / CFN 42), this protein is Holliday junction branch migration complex subunit RuvA.